A 500-amino-acid polypeptide reads, in one-letter code: Bifunctional protein GlmU (500 aa).

Residues 1 to 242 form a pyrophosphorylase region; sequence MPVQTAVVVL…SAKVAGANDR (242 aa). UDP-N-acetyl-alpha-D-glucosamine is bound by residues 10 to 13, K24, Q81, and 86 to 87; these read LAAG and GT. D112 provides a ligand contact to Mg(2+). G151, E167, N182, and N240 together coordinate UDP-N-acetyl-alpha-D-glucosamine. Residue N240 participates in Mg(2+) binding. A linker region spans residues 243-263; it reads VQLSRLAAELNRRTVENWMRA. An N-acetyltransferase region spans residues 264–500; it reads GVTVVDPSTT…KQDLKDGIEQ (237 aa). UDP-N-acetyl-alpha-D-glucosamine contacts are provided by R345 and K363. Residue H375 is the Proton acceptor of the active site. UDP-N-acetyl-alpha-D-glucosamine contacts are provided by Y378 and N389. Acetyl-CoA contacts are provided by residues A392, 398–399, S417, and A435; that span reads NY. The segment at 459–500 is disordered; it reads DGWVQRNRPGTPAAEAASAAGPHHSSDLHETEKQDLKDGIEQ. The segment covering 482–500 has biased composition (basic and acidic residues); the sequence is HSSDLHETEKQDLKDGIEQ.

In the N-terminal section; belongs to the N-acetylglucosamine-1-phosphate uridyltransferase family. It in the C-terminal section; belongs to the transferase hexapeptide repeat family. Homotrimer. It depends on Mg(2+) as a cofactor.

The protein localises to the cytoplasm. The catalysed reaction is alpha-D-glucosamine 1-phosphate + acetyl-CoA = N-acetyl-alpha-D-glucosamine 1-phosphate + CoA + H(+). The enzyme catalyses N-acetyl-alpha-D-glucosamine 1-phosphate + UTP + H(+) = UDP-N-acetyl-alpha-D-glucosamine + diphosphate. It participates in nucleotide-sugar biosynthesis; UDP-N-acetyl-alpha-D-glucosamine biosynthesis; N-acetyl-alpha-D-glucosamine 1-phosphate from alpha-D-glucosamine 6-phosphate (route II): step 2/2. Its pathway is nucleotide-sugar biosynthesis; UDP-N-acetyl-alpha-D-glucosamine biosynthesis; UDP-N-acetyl-alpha-D-glucosamine from N-acetyl-alpha-D-glucosamine 1-phosphate: step 1/1. The protein operates within bacterial outer membrane biogenesis; LPS lipid A biosynthesis. In terms of biological role, catalyzes the last two sequential reactions in the de novo biosynthetic pathway for UDP-N-acetylglucosamine (UDP-GlcNAc). The C-terminal domain catalyzes the transfer of acetyl group from acetyl coenzyme A to glucosamine-1-phosphate (GlcN-1-P) to produce N-acetylglucosamine-1-phosphate (GlcNAc-1-P), which is converted into UDP-GlcNAc by the transfer of uridine 5-monophosphate (from uridine 5-triphosphate), a reaction catalyzed by the N-terminal domain. This Rhodococcus opacus (strain B4) protein is Bifunctional protein GlmU.